We begin with the raw amino-acid sequence, 196 residues long: SERTA domain-containing protein 3 (196 aa).

The segment at 1-21 (MVGGLKRKHSDLEEEEERWEW) is disordered. The region spanning 26–73 (LQSYQQALLRISLDKVQRSLGPRAPSLRRHVLIHNTLQQLQAALRLAP) is the SERTA domain. The disordered stretch occupies residues 104-125 (TSMDGTEPPQNPVTPLGLQNEV).

Interacts with RPA2. As to quaternary structure, (Microbial infection) Interacts with influenza virus PA, PB1 and PB2,leading to inhibition of RdRp complex assembly. In terms of assembly, (Microbial infection) Interacts with zika virus capsid protein.

The protein resides in the nucleus. Functionally, antiviral interferon-stimulated protein that plays a role in innate immunity and in the suppression of viruses through different mechanisms. Plays a role in the late phase response of TLR-induced immune effector expression. During influenza infection, interacts with PB2, PB1, and PA to disrupt the formation of the viral RdRp complex. Inhibits zika virus by interacting with the capsid protein in the nucleolus and reducing its abundance through proteasomal degradation. Strong transcriptional coactivator. This chain is SERTA domain-containing protein 3 (SERTAD3), found in Homo sapiens (Human).